Consider the following 258-residue polypeptide: MRGFNNKIKSVYQELTNSKEKFGSFHKTLIHLHTPVSYDYKLFSNWTATKYRKITEDELYDIFFENKKIKVDKTIFFSNFDKVVFSSSKEYISFLMLAEAIIKNGIEIVVVTDHNTTKGIKKLQMAVSIIMKNYPIYDIHPHILHGVEISAADKLHIVCIYDYEQESWVNQWLSENIISEKDGSYQHSLTIMKDFNNQKIVNYIAHFNSYDILKKGSHLSGAYKRKIFSKENTRFWSLILTRKNLRNNLIFSIKKLVY.

This is an uncharacterized protein from Streptococcus pneumoniae serotype 4 (strain ATCC BAA-334 / TIGR4).